The sequence spans 805 residues: Hypoxia-inducible factor 1-alpha (805 aa).

The segment at 1 to 26 (MEGSVVVSEKKRISSERRKEKSRDAA) is disordered. Basic and acidic residues predominate over residues 8–26 (SEKKRISSERRKEKSRDAA). One can recognise a bHLH domain in the interval 17 to 70 (RRKEKSRDAARCRRSNESEVFYELSHELPLPHNVSSHLDKASIMRLDHQLPAVE). PAS domains follow at residues 85-157 (DKQL…PAKK) and 229-300 (PHPS…TKGQ). A PAC domain is found at 303 to 346 (TGQYRMLAKKGGYVWVETQATVIYNSKNSQPQCIVCVNYVLSEV). Residues proline 404 and proline 560 each carry the 4-hydroxyproline modification. The tract at residues 628 to 669 (KESTSAPVSPYNGNRSRTSSPVRPAKAVVDKTEKSRPGTPNL) is disordered. Polar residues predominate over residues 629–648 (ESTSAPVSPYNGNRSRTSSP). Asparagine 782 is modified ((3S)-3-hydroxyasparagine).

As to quaternary structure, efficient DNA binding requires heterodimerization of an alpha and a beta/ARNT subunit. In normoxia, is hydroxylated on Pro-404 and Pro-560. The hydroxylated prolines promote interaction with VHL, initiating rapid ubiquitination and subsequent proteasomal degradation. Under hypoxia, proline hydroxylation is impaired and ubiquitination is attenuated, resulting in stabilization. Post-translationally, in normoxia, is hydroxylated on Asn-782, thus abrogating interaction with CREBBP and EP300 and preventing transcriptional activation. In terms of processing, the iron and 2-oxoglutarate dependent 3-hydroxylation of asparagine is (S) stereospecific within HIF CTAD domains.

Its subcellular location is the cytoplasm. The protein resides in the nucleus. It localises to the nucleus speckle. With respect to regulation, induced by reactive oxygen species (ROS). Functions as a master transcriptional regulator of the adaptive response to hypoxia. Under hypoxic conditions, activates the transcription of over 40 genes, including erythropoietin, glucose transporters, glycolytic enzymes, vascular endothelial growth factor, HILPDA, and other genes whose protein products increase oxygen delivery or facilitate metabolic adaptation to hypoxia. Plays an essential role in embryonic vascularization, tumor angiogenesis and pathophysiology of ischemic disease. In Xenopus laevis (African clawed frog), this protein is Hypoxia-inducible factor 1-alpha (hif1a).